We begin with the raw amino-acid sequence, 327 residues long: Ribosomal RNA large subunit methyltransferase F (327 aa).

Positions 1-24 (MPRKTSSQPRPAEPKAVLHPRNRH) are disordered.

It belongs to the methyltransferase superfamily. METTL16/RlmF family.

The protein resides in the cytoplasm. It catalyses the reaction adenosine(1618) in 23S rRNA + S-adenosyl-L-methionine = N(6)-methyladenosine(1618) in 23S rRNA + S-adenosyl-L-homocysteine + H(+). In terms of biological role, specifically methylates the adenine in position 1618 of 23S rRNA. This chain is Ribosomal RNA large subunit methyltransferase F, found in Stutzerimonas stutzeri (strain A1501) (Pseudomonas stutzeri).